We begin with the raw amino-acid sequence, 687 residues long: A-kinase anchor protein 8 (687 aa).

The tract at residues 1 to 195 is interaction with MCM2; that stretch reads MEQSYGGYGA…FLRGRGQGRF (195 aa). Residues 1-210 form an interaction with DPY30 region; sequence MEQSYGGYGA…SSTFIRSDPF (210 aa). At Ser-72 the chain carries Phosphoserine. Positions 104–124 are disordered; it reads SKEGGRGGISSGGEGMQDRDS. Arg-109 is subject to Asymmetric dimethylarginine; alternate. Arg-109 bears the Omega-N-methylarginine; alternate mark. A compositionally biased stretch (gly residues) spans 109–118; sequence RGGISSGGEG. The segment at 109-201 is interaction with DDX5; it reads RGGISSGGEG…QGRFQDRSNS (93 aa). Residues 127–152 are nuclear matrix targeting site; the sequence is RFQPYESYDSRPCMPEHTPYRPSYSY. The segment at 189–221 is disordered; it reads GRGQGRFQDRSNSSTFIRSDPFMPPSASSEPLS. Ser-199 carries the phosphoserine modification. Omega-N-methylarginine occurs at positions 233 and 277. Residues 278–380 form a disordered region; sequence SQTRIRDWPR…KQRRRDRMRD (103 aa). 2 stretches are compositionally biased toward basic and acidic residues: residues 281–295 and 312–321; these read RIRDWPRRRGFERFG and PDAKLARADS. The short motif at 287–304 is the Bipartite nuclear localization signal element; that stretch reads RRRGFERFGPDNMGRKRK. Lys-315 participates in a covalent cross-link: Glycyl lysine isopeptide (Lys-Gly) (interchain with G-Cter in SUMO2). A phosphoserine mark is found at Ser-321, Ser-326, and Ser-337. Acidic residues predominate over residues 322 to 332; it reads EGDLSENDDGA. Over residues 336-358 the composition is skewed to basic and acidic residues; it reads RSGDEEFRGEDDLCDSRKQRGEK. Residues 385-448 form an involved in chromatin-binding region; the sequence is RIQFACSVCK…NKKIEKRRQE (64 aa). C2H2 AKAP95-type zinc fingers lie at residues 390–412 and 479–502; these read CSVCKFRSFEDEEIQKHLQSKFH and CLACDMLIPAQHQLLQRHLHSVDH. The tract at residues 523 to 565 is involved in condensin complex recruitment; it reads SVLNNKHIVKMLEKYLKGEDPFVNETADLETEGDENLGEEKET. Position 553 is a phosphothreonine (Thr-553). Lys-563 participates in a covalent cross-link: Glycyl lysine isopeptide (Lys-Gly) (interchain with G-Cter in SUMO2). The interval 568–585 is RII-binding; it reads EVAAEVLAEVITAAVKAV. A required for interaction with MYCBP region spans residues 572-589; that stretch reads EVLAEVITAAVKAVEGDG. The disordered stretch occupies residues 606–687; the sequence is VDTAEAGSDS…DAEAKDTPTE (82 aa). A compositionally biased stretch (basic and acidic residues) spans 633-648; that stretch reads RNMEDMARGEAAEARN. Positions 649 to 666 are enriched in low complexity; the sequence is EAAVPAAAAGSPVPVIAI. The residue at position 659 (Ser-659) is a Phosphoserine.

Belongs to the AKAP95 family. In terms of assembly, binds to dimeric RII-alpha regulatory subunit of PKA during mitosis. Interacts (via C-terminus) with FIGN. Interacts with NCAPD2, CCND1, CCND3, MCM2, RPS6KA1, PDE4A, CASP3. Interacts with DDX5, CCNE1. Interacts with NFKB1; detetcted in the cytoplasm. Interacts with MYCBP; MYCBP is translocated to the nucleus and the interaction prevents the association of the PKA catalytic subunit leading to suppression of PKA activity. Interacts with DPY30; mediating AKAP8 association with at least the MLL4/WBP7 HMT complex. Interacts with HDAC3; increased during mitosis. Interacts with GJA1; in the nucleus and in the nuclear membrane; the nuclear association increases with progress of cell cycle G1, S and G2 phase and decreases in M phase. Phosphorylated on tyrosine residues probably by SRC subfamily protein kinases; multiple phosphorylation is leading to dissociation from nuclear structures implicated in chromatin structural changes. In terms of tissue distribution, widely expressed. The protein has been detected in liver, fibroblasts, granulosa, myoblast, lymphoma and Sertoli cells.

The protein resides in the nucleus matrix. It localises to the nucleus. The protein localises to the nucleolus. It is found in the cytoplasm. In terms of biological role, anchoring protein that mediates the subcellular compartmentation of cAMP-dependent protein kinase (PKA type II). Acts as an anchor for a PKA-signaling complex onto mitotic chromosomes, which is required for maintenance of chromosomes in a condensed form throughout mitosis. Recruits condensin complex subunit NCAPD2 to chromosomes required for chromatin condensation; the function appears to be independent from PKA-anchoring. May help to deliver cyclin D/E to CDK4 to facilitate cell cycle progression. Required for cell cycle G2/M transition and histone deacetylation during mitosis. In mitotic cells recruits HDAC3 to the vicinity of chromatin leading to deacetylation and subsequent phosphorylation at 'Ser-10' of histone H3; in this function may act redundantly with AKAP8L. Involved in nuclear retention of RPS6KA1 upon ERK activation thus inducing cell proliferation. May be involved in regulation of DNA replication by acting as scaffold for MCM2. Enhances HMT activity of the KMT2 family MLL4/WBP7 complex and is involved in transcriptional regulation. In a teratocarcinoma cell line is involved in retinoic acid-mediated induction of developmental genes implicating H3 'Lys-4' methylation. May be involved in recruitment of active CASP3 to the nucleus in apoptotic cells. May act as a carrier protein of GJA1 for its transport to the nucleus. May play a repressive role in the regulation of rDNA transcription. Preferentially binds GC-rich DNA in vitro. In cells, associates with ribosomal RNA (rRNA) chromatin, preferentially with rRNA promoter and transcribed regions. Involved in modulation of Toll-like receptor signaling. Required for the cAMP-dependent suppression of TNF-alpha in early stages of LPS-induced macrophage activation; the function probably implicates targeting of PKA to NFKB1. The protein is A-kinase anchor protein 8 (Akap8) of Rattus norvegicus (Rat).